A 332-amino-acid polypeptide reads, in one-letter code: Monoterpene synthase 25 (332 aa).

Positions 115, 180, 240, 244, and 248 each coordinate Mg(2+). Positions 115 to 121 (DDPVVFD) match the DDXXXXD motif motif. An NSE/DTE motif motif is present at residues 240–248 (NDILSFYKE).

This sequence belongs to the trichodiene synthase family. Requires Mg(2+) as cofactor.

Its function is as follows. Terpene cyclase that catalyzes the cyclization of geranyl diphosphate (GPP) to myrcene and linalool. The protein is Monoterpene synthase 25 of Postia placenta (strain ATCC 44394 / Madison 698-R) (Brown rot fungus).